Reading from the N-terminus, the 266-residue chain is Shikimate dehydrogenase (NADP(+)) (266 aa).

Shikimate-binding positions include 16 to 18 (SKS) and Thr65. Residue Lys69 is the Proton acceptor of the active site. Positions 90 and 105 each coordinate shikimate. Residues 128–132 (GAGGS) and Leu211 contribute to the NADP(+) site. Shikimate is bound at residue Tyr213. An NADP(+)-binding site is contributed by Gly233.

It belongs to the shikimate dehydrogenase family. Homodimer.

The enzyme catalyses shikimate + NADP(+) = 3-dehydroshikimate + NADPH + H(+). It functions in the pathway metabolic intermediate biosynthesis; chorismate biosynthesis; chorismate from D-erythrose 4-phosphate and phosphoenolpyruvate: step 4/7. Involved in the biosynthesis of the chorismate, which leads to the biosynthesis of aromatic amino acids. Catalyzes the reversible NADPH linked reduction of 3-dehydroshikimate (DHSA) to yield shikimate (SA). This Helicobacter pylori (strain J99 / ATCC 700824) (Campylobacter pylori J99) protein is Shikimate dehydrogenase (NADP(+)).